We begin with the raw amino-acid sequence, 601 residues long: Bifunctional protein GlmU (601 aa).

The interval 1–375 (MKSDLAIVIL…SELLLGVNNR (375 aa)) is pyrophosphorylase. UDP-N-acetyl-alpha-D-glucosamine-binding positions include 10-13 (LAAG), Lys-24, Gln-75, and 81-82 (GT). A Mg(2+)-binding site is contributed by Asp-165. UDP-N-acetyl-alpha-D-glucosamine is bound by residues Gly-201, Glu-216, Asn-230, and Asn-373. Asn-373 is a binding site for Mg(2+). Residues 376 to 396 (VQLAKTEKILNDQIIKRWQLY) are linker. The N-acetyltransferase stretch occupies residues 397 to 601 (GVTIKSPETT…PKWAENRGDG (205 aa)). UDP-N-acetyl-alpha-D-glucosamine contacts are provided by Arg-478 and Lys-496. His-508 (proton acceptor) is an active-site residue. UDP-N-acetyl-alpha-D-glucosamine-binding residues include Tyr-511 and Asn-522. Acetyl-CoA-binding positions include Ala-525, 531-532 (NY), and Ala-568.

The protein in the N-terminal section; belongs to the N-acetylglucosamine-1-phosphate uridyltransferase family. In the C-terminal section; belongs to the transferase hexapeptide repeat family. As to quaternary structure, homotrimer. Mg(2+) is required as a cofactor.

The protein resides in the cytoplasm. The enzyme catalyses alpha-D-glucosamine 1-phosphate + acetyl-CoA = N-acetyl-alpha-D-glucosamine 1-phosphate + CoA + H(+). The catalysed reaction is N-acetyl-alpha-D-glucosamine 1-phosphate + UTP + H(+) = UDP-N-acetyl-alpha-D-glucosamine + diphosphate. It participates in nucleotide-sugar biosynthesis; UDP-N-acetyl-alpha-D-glucosamine biosynthesis; N-acetyl-alpha-D-glucosamine 1-phosphate from alpha-D-glucosamine 6-phosphate (route II): step 2/2. The protein operates within nucleotide-sugar biosynthesis; UDP-N-acetyl-alpha-D-glucosamine biosynthesis; UDP-N-acetyl-alpha-D-glucosamine from N-acetyl-alpha-D-glucosamine 1-phosphate: step 1/1. It functions in the pathway bacterial outer membrane biogenesis; LPS lipid A biosynthesis. Catalyzes the last two sequential reactions in the de novo biosynthetic pathway for UDP-N-acetylglucosamine (UDP-GlcNAc). The C-terminal domain catalyzes the transfer of acetyl group from acetyl coenzyme A to glucosamine-1-phosphate (GlcN-1-P) to produce N-acetylglucosamine-1-phosphate (GlcNAc-1-P), which is converted into UDP-GlcNAc by the transfer of uridine 5-monophosphate (from uridine 5-triphosphate), a reaction catalyzed by the N-terminal domain. The polypeptide is Bifunctional protein GlmU (Tropheryma whipplei (strain TW08/27) (Whipple's bacillus)).